We begin with the raw amino-acid sequence, 493 residues long: Glutamyl-tRNA(Gln) amidotransferase subunit A (493 aa).

Residues Lys79 and Ser159 each act as charge relay system in the active site. The active-site Acyl-ester intermediate is the Ser183.

It belongs to the amidase family. GatA subfamily. Heterotrimer of A, B and C subunits.

The catalysed reaction is L-glutamyl-tRNA(Gln) + L-glutamine + ATP + H2O = L-glutaminyl-tRNA(Gln) + L-glutamate + ADP + phosphate + H(+). Its function is as follows. Allows the formation of correctly charged Gln-tRNA(Gln) through the transamidation of misacylated Glu-tRNA(Gln) in organisms which lack glutaminyl-tRNA synthetase. The reaction takes place in the presence of glutamine and ATP through an activated gamma-phospho-Glu-tRNA(Gln). The chain is Glutamyl-tRNA(Gln) amidotransferase subunit A from Sinorhizobium medicae (strain WSM419) (Ensifer medicae).